A 338-amino-acid chain; its full sequence is Holliday junction branch migration complex subunit RuvB (338 aa).

Residues 4–184 (ADRLMSAAAV…FGIVQRLEFY (181 aa)) form a large ATPase domain (RuvB-L) region. ATP is bound by residues Ile-23, Arg-24, Gly-65, Lys-68, Thr-69, Thr-70, 131–133 (EDY), Arg-174, Tyr-184, and Arg-221. Thr-69 contacts Mg(2+). The tract at residues 185-255 (QTGDLQHIVS…VAVSALNMLN (71 aa)) is small ATPAse domain (RuvB-S). The interval 258–338 (TEGFDFMDRK…GLEEHGGDPE (81 aa)) is head domain (RuvB-H). Positions 294, 313, and 318 each coordinate DNA.

Belongs to the RuvB family. As to quaternary structure, homohexamer. Forms an RuvA(8)-RuvB(12)-Holliday junction (HJ) complex. HJ DNA is sandwiched between 2 RuvA tetramers; dsDNA enters through RuvA and exits via RuvB. An RuvB hexamer assembles on each DNA strand where it exits the tetramer. Each RuvB hexamer is contacted by two RuvA subunits (via domain III) on 2 adjacent RuvB subunits; this complex drives branch migration. In the full resolvosome a probable DNA-RuvA(4)-RuvB(12)-RuvC(2) complex forms which resolves the HJ.

The protein localises to the cytoplasm. The enzyme catalyses ATP + H2O = ADP + phosphate + H(+). Its function is as follows. The RuvA-RuvB-RuvC complex processes Holliday junction (HJ) DNA during genetic recombination and DNA repair, while the RuvA-RuvB complex plays an important role in the rescue of blocked DNA replication forks via replication fork reversal (RFR). RuvA specifically binds to HJ cruciform DNA, conferring on it an open structure. The RuvB hexamer acts as an ATP-dependent pump, pulling dsDNA into and through the RuvAB complex. RuvB forms 2 homohexamers on either side of HJ DNA bound by 1 or 2 RuvA tetramers; 4 subunits per hexamer contact DNA at a time. Coordinated motions by a converter formed by DNA-disengaged RuvB subunits stimulates ATP hydrolysis and nucleotide exchange. Immobilization of the converter enables RuvB to convert the ATP-contained energy into a lever motion, pulling 2 nucleotides of DNA out of the RuvA tetramer per ATP hydrolyzed, thus driving DNA branch migration. The RuvB motors rotate together with the DNA substrate, which together with the progressing nucleotide cycle form the mechanistic basis for DNA recombination by continuous HJ branch migration. Branch migration allows RuvC to scan DNA until it finds its consensus sequence, where it cleaves and resolves cruciform DNA. This is Holliday junction branch migration complex subunit RuvB from Sodalis glossinidius (strain morsitans).